Consider the following 714-residue polypeptide: Fatty acid oxidation complex subunit alpha (714 aa).

The enoyl-CoA hydratase stretch occupies residues 1-190; sequence MEMASAFTLN…KLGLVDDVVP (190 aa). Residues 306–714 form a 3-hydroxyacyl-CoA dehydrogenase region; it reads APLNSVGILG…FWKTTATDLQ (409 aa).

It in the N-terminal section; belongs to the enoyl-CoA hydratase/isomerase family. The protein in the central section; belongs to the 3-hydroxyacyl-CoA dehydrogenase family. As to quaternary structure, heterotetramer of two alpha chains (FadJ) and two beta chains (FadI).

Its subcellular location is the cytoplasm. It carries out the reaction a (3S)-3-hydroxyacyl-CoA = a (2E)-enoyl-CoA + H2O. The catalysed reaction is a 4-saturated-(3S)-3-hydroxyacyl-CoA = a (3E)-enoyl-CoA + H2O. The enzyme catalyses a (3S)-3-hydroxyacyl-CoA + NAD(+) = a 3-oxoacyl-CoA + NADH + H(+). It catalyses the reaction (3S)-3-hydroxybutanoyl-CoA = (3R)-3-hydroxybutanoyl-CoA. It functions in the pathway lipid metabolism; fatty acid beta-oxidation. In terms of biological role, catalyzes the formation of a hydroxyacyl-CoA by addition of water on enoyl-CoA. Also exhibits 3-hydroxyacyl-CoA epimerase and 3-hydroxyacyl-CoA dehydrogenase activities. The polypeptide is Fatty acid oxidation complex subunit alpha (Escherichia coli O9:H4 (strain HS)).